The following is a 1089-amino-acid chain: GPI ethanolamine phosphate transferase 3, catalytic subunit (1089 aa).

Residues 4–24 (ASVLLFLAWVCFLFYAGIALF) traverse the membrane as a helical segment. An N-linked (GlcNAc...) asparagine glycan is attached at asparagine 268. The next 13 membrane-spanning stretches (helical) occupy residues 457-477 (LLAASCFICLLASQWAISPGF), 482-502 (LLLTPVAWGLVGAIAYAGLLG), 510-530 (LVLLGAVAAVSSFLPFLWKAW), 541-561 (TLFPIPGPVLLLLLFRLAVFF), 575-595 (FLLGSFILLLVVQLHWEGQLL), 668-688 (LWYGACVAALVALLAAVRLWL), 701-721 (MLFVRWGLPLMALGTAAYWAL), 747-767 (VAGLAASGLALLLWKPVTVLV), 830-850 (SVYSAAMVTALTLLAFPLLLL), 857-877 (LVFLLLFLQSFLLLHLLAAGI), 944-964 (FASHLLFAVGCPLLLLWPFLC), 1014-1034 (LKYLFILGIQILACALAASIL), and 1048-1068 (FIFEAVGFIVSSVGLLLGIAL).

The protein belongs to the PIGG/PIGN/PIGO family. PIGO subfamily. In terms of assembly, part of the ethanolamine phosphate transferase 3 complex composed by PIGO and PIGF. PIGF is required to stabilize PIGO.

It localises to the endoplasmic reticulum membrane. The protein operates within glycolipid biosynthesis; glycosylphosphatidylinositol-anchor biosynthesis. Its function is as follows. Catalytic subunit of the ethanolamine phosphate transferase 3 complex that transfers an ethanolamine phosphate (EtNP) from a phosphatidylethanolamine (PE) to the 6-OH position of the third alpha-1,2-linked mannose of an alpha-D-Man-(1-&gt;2)-alpha-D-Man-(1-&gt;6)-2-PEtn-alpha-D-Man-(1-&gt;4)-alpha-D-GlcN-(1-&gt;6)-(1-radyl,2-acyl-sn-glycero-3-phospho)-2-acyl-inositol (also termed H6) intermediate to generate a 6-PEtn-alpha-D-Man-(1-&gt;2)-alpha-D-Man-(1-&gt;6)-2-PEtn-alpha-D-Man-(1-&gt;4)-alpha-D-GlcN-(1-&gt;6)-(1-radyl,2-acyl-sn-glycero-3-phospho)-2-acyl-inositol (also termed H7) and participates in the tenth step of the glycosylphosphatidylinositol-anchor biosynthesis. The sequence is that of GPI ethanolamine phosphate transferase 3, catalytic subunit from Homo sapiens (Human).